An 83-amino-acid polypeptide reads, in one-letter code: U5-theraphotoxin-Hs1a 3 (83 aa).

Positions 1–21 (MKTSMFLTLTGLVLLFVVCYA) are cleaved as a signal peptide. The propeptide occupies 22–49 (SESEEKDFPKELLSSIFAADSDFKVEER). 3 disulfides stabilise this stretch: cysteine 51–cysteine 63, cysteine 56–cysteine 68, and cysteine 62–cysteine 75.

This sequence belongs to the neurotoxin 10 (Hwtx-1) family. 51 (Hntx-8) subfamily. Hntx-8 sub-subfamily. As to expression, expressed by the venom gland.

The protein localises to the secreted. Functionally, agglutinates erythrocytes. The chain is U5-theraphotoxin-Hs1a 3 from Cyriopagopus schmidti (Chinese bird spider).